The sequence spans 118 residues: Large ribosomal subunit protein bL20 (118 aa).

The protein belongs to the bacterial ribosomal protein bL20 family.

Its function is as follows. Binds directly to 23S ribosomal RNA and is necessary for the in vitro assembly process of the 50S ribosomal subunit. It is not involved in the protein synthesizing functions of that subunit. The chain is Large ribosomal subunit protein bL20 from Caulobacter vibrioides (strain ATCC 19089 / CIP 103742 / CB 15) (Caulobacter crescentus).